Here is a 440-residue protein sequence, read N- to C-terminus: MQPQRLGPRAGMGPFCLGCSHRKCYSPIRNLISQETFKFHFKNLGYAKGRKDTFLCYEVTRKDCDSPVSLHHGVFKNKDNIHAEICFLYWFHDKVLKVLSPREEFKITWYMSWSPCFECAEQIVRFLATHHNLSLDIFSSRLYNVQDPETQQNLCRLVQEGAQVAAMDLYEFKKCWKKFVDNGGRRFRPWKRLLTNFRYQDSKLQEILRPCYISVPSSSSSTLSNICLTKGLPETRFWVEGRRMDPLSEEEFYSQFYNQRVKHLCYYHRMKPYLCYQLEQFNGQAPLKGCLLSEKGKQHAEILFLDKIRSMELSQVTITCYLTWSPCPNCAWQLAAFKRDRPDLILHIYTSRLYFHWKRPFQKGLCSLWQSGILVDVMDLPQFTDCWTNFVNPKRPFWPWKGLEIISRRTQRRLRRIKESWGLQDLVNDFGNLQLGPPMS.

2 consecutive CMP/dCMP-type deaminase domains span residues 49–165 (GRKD…AQVA) and 249–368 (EEEF…LCSL). Zn(2+) is bound at residue H82. Residue E84 is the Proton donor of the active site. Zn(2+) is bound by residues C116, C119, H299, C327, and C330.

This sequence belongs to the cytidine and deoxycytidylate deaminase family. In terms of assembly, homodimer. Interacts with mouse mammary tumor virus (MMTV) nucleocapsid protein p14. Requires Zn(2+) as cofactor. In terms of tissue distribution, expressed in spleen, node and lung.

Its subcellular location is the cytoplasm. The enzyme catalyses a 2'-deoxycytidine in single-stranded DNA + H2O + H(+) = a 2'-deoxyuridine in single-stranded DNA + NH4(+). Its function is as follows. DNA deaminase (cytidine deaminase) which acts as an inhibitor of retrovirus replication and retrotransposon mobility via deaminase-dependent and -independent mechanisms. Selectively targets single-stranded DNA and does not deaminate double-stranded DNA or single- or double-stranded RNA. Exhibits antiviral activity against HIV-1, simian immunodeficiency viruses (SIVs), mouse mammary tumor virus (MMTV) and friend murine leukemia virus (FrMLV) and may inhibit the mobility of LTR retrotransposons. The polypeptide is DNA dC-&gt;dU-editing enzyme APOBEC-3 (Apobec3) (Mus musculus (Mouse)).